The following is a 330-amino-acid chain: Glycerol-3-phosphate dehydrogenase [NAD(P)+] (330 aa).

Serine 11, phenylalanine 12, arginine 32, and lysine 106 together coordinate NADPH. Positions 106, 133, and 135 each coordinate sn-glycerol 3-phosphate. Alanine 137 is a binding site for NADPH. Residues lysine 188, aspartate 241, serine 251, arginine 252, and asparagine 253 each coordinate sn-glycerol 3-phosphate. Lysine 188 functions as the Proton acceptor in the catalytic mechanism. Residue arginine 252 coordinates NADPH. Valine 276 and glutamate 278 together coordinate NADPH.

It belongs to the NAD-dependent glycerol-3-phosphate dehydrogenase family.

It is found in the cytoplasm. It carries out the reaction sn-glycerol 3-phosphate + NAD(+) = dihydroxyacetone phosphate + NADH + H(+). The catalysed reaction is sn-glycerol 3-phosphate + NADP(+) = dihydroxyacetone phosphate + NADPH + H(+). Its pathway is membrane lipid metabolism; glycerophospholipid metabolism. Its function is as follows. Catalyzes the reduction of the glycolytic intermediate dihydroxyacetone phosphate (DHAP) to sn-glycerol 3-phosphate (G3P), the key precursor for phospholipid synthesis. In Clostridium botulinum (strain Eklund 17B / Type B), this protein is Glycerol-3-phosphate dehydrogenase [NAD(P)+].